The sequence spans 189 residues: Small ribosomal subunit protein uS5 (189 aa).

Residues 20–83 (FMDRLVHINR…ESAKRSLIRV (64 aa)) form the S5 DRBM domain.

This sequence belongs to the universal ribosomal protein uS5 family. In terms of assembly, part of the 30S ribosomal subunit. Contacts proteins S4 and S8.

In terms of biological role, with S4 and S12 plays an important role in translational accuracy. Its function is as follows. Located at the back of the 30S subunit body where it stabilizes the conformation of the head with respect to the body. This chain is Small ribosomal subunit protein uS5, found in Methylocella silvestris (strain DSM 15510 / CIP 108128 / LMG 27833 / NCIMB 13906 / BL2).